The primary structure comprises 455 residues: 2-oxoisovalerate dehydrogenase subunit alpha, mitochondrial (455 aa).

A mitochondrion-targeting transit peptide spans 1-55; it reads MQGSAKMAMAVAVAVARVWRPSRGLGRTGLPLLRLLGARGLARFHPHRWQQQQHF. Positions 168 and 169 each coordinate thiamine diphosphate. S216 provides a ligand contact to K(+). S217 serves as a coordination point for thiamine diphosphate. K(+) is bound by residues P218, T221, and Q222. E248 is a binding site for Mg(2+). G249, A250, and R275 together coordinate thiamine diphosphate. Residues N277 and Y279 each contribute to the Mg(2+) site. Position 346 (H346) interacts with thiamine diphosphate. Phosphoserine; by BCKDK is present on S347. T348 is subject to Phosphothreonine. 2 positions are modified to phosphoserine: S349 and S357. Position 366 is an N6-acetyllysine; alternate (K366). At K366 the chain carries N6-succinyllysine; alternate. K390 bears the N6-succinyllysine mark.

This sequence belongs to the BCKDHA family. As to quaternary structure, heterotetramer of 2 alpha/BCKDHA and 2 beta chains/BCKDHB that forms the branched-chain alpha-keto acid decarboxylase (E1) component of the BCKD complex. The branched-chain alpha-ketoacid dehydrogenase is a large complex composed of three major building blocks E1, E2 and E3. It is organized around E2, a 24-meric cubic core composed of DBT, to which are associated 6 to 12 copies of E1, and approximately 6 copies of the dehydrogenase E3, a DLD dimer. Interacts with PPM1K. Thiamine diphosphate is required as a cofactor. The cofactor is Mg(2+). In terms of processing, phosphorylated at Ser-347 by BCKDK and dephosphorylated by protein phosphatase PPM1K. In terms of tissue distribution, expressed in kidney (at protein level).

Its subcellular location is the mitochondrion matrix. It carries out the reaction N(6)-[(R)-lipoyl]-L-lysyl-[protein] + 3-methyl-2-oxobutanoate + H(+) = N(6)-[(R)-S(8)-2-methylpropanoyldihydrolipoyl]-L-lysyl-[protein] + CO2. Together with BCKDHB forms the heterotetrameric E1 subunit of the mitochondrial branched-chain alpha-ketoacid dehydrogenase (BCKD) complex. The BCKD complex catalyzes the multi-step oxidative decarboxylation of alpha-ketoacids derived from the branched-chain amino-acids valine, leucine and isoleucine producing CO2 and acyl-CoA which is subsequently utilized to produce energy. The E1 subunit catalyzes the first step with the decarboxylation of the alpha-ketoacid forming an enzyme-product intermediate. A reductive acylation mediated by the lipoylamide cofactor of E2 extracts the acyl group from the E1 active site for the next step of the reaction. This is 2-oxoisovalerate dehydrogenase subunit alpha, mitochondrial (BCKDHA) from Bos taurus (Bovine).